Here is a 138-residue protein sequence, read N- to C-terminus: Ribulose bisphosphate carboxylase small subunit (138 aa).

It belongs to the RuBisCO small chain family. Heterohexadecamer of 8 large and 8 small subunits.

It localises to the plastid. The protein localises to the chloroplast. Its function is as follows. RuBisCO catalyzes two reactions: the carboxylation of D-ribulose 1,5-bisphosphate, the primary event in carbon dioxide fixation, as well as the oxidative fragmentation of the pentose substrate in the photorespiration process. Both reactions occur simultaneously and in competition at the same active site. Although the small subunit is not catalytic it is essential for maximal activity. The protein is Ribulose bisphosphate carboxylase small subunit of Pyropia yezoensis (Susabi-nori).